Consider the following 240-residue polypeptide: Ribosomal RNA small subunit methyltransferase G (240 aa).

Residues glycine 79, phenylalanine 84, 130 to 131 (AE), and arginine 149 each bind S-adenosyl-L-methionine.

It belongs to the methyltransferase superfamily. RNA methyltransferase RsmG family.

The protein localises to the cytoplasm. In terms of biological role, specifically methylates the N7 position of a guanine in 16S rRNA. The protein is Ribosomal RNA small subunit methyltransferase G of Lactobacillus helveticus (strain DPC 4571).